We begin with the raw amino-acid sequence, 370 residues long: GMP synthase [glutamine-hydrolyzing] subunit B (370 aa).

The region spanning 3–189 (FDPQKFVDEI…LGLPRDIYNR (187 aa)) is the GMPS ATP-PPase domain. 29–35 (SGGVDST) lines the ATP pocket.

As to quaternary structure, heterodimer composed of a glutamine amidotransferase subunit (A) and a GMP-binding subunit (B).

It catalyses the reaction XMP + L-glutamine + ATP + H2O = GMP + L-glutamate + AMP + diphosphate + 2 H(+). Its pathway is purine metabolism; GMP biosynthesis; GMP from XMP (L-Gln route): step 1/1. Catalyzes the synthesis of GMP from XMP. This is GMP synthase [glutamine-hydrolyzing] subunit B (guaAB) from Sulfurisphaera tokodaii (strain DSM 16993 / JCM 10545 / NBRC 100140 / 7) (Sulfolobus tokodaii).